Here is a 558-residue protein sequence, read N- to C-terminus: Pyrethroid hydrolase Ces2a (558 aa).

Positions 1–26 are cleaved as a signal peptide; the sequence is MPLARLPGWLCVVACGLLLLLQHVHG. Residues Cys95 and Cys122 are joined by a disulfide bond. Lys209 is modified (N6-succinyllysine). Ser227 acts as the Acyl-ester intermediate in catalysis. N-linked (GlcNAc...) asparagine glycosylation occurs at Asn275. A disulfide bridge connects residues Cys279 and Cys290. Lys296 carries the post-translational modification N6-succinyllysine. Glu344 functions as the Charge relay system in the catalytic mechanism. A glycan (N-linked (GlcNAc...) asparagine) is linked at Asn361. His456 (charge relay system) is an active-site residue.

The protein belongs to the type-B carboxylesterase/lipase family.

It is found in the microsome. It catalyses the reaction (-)-trans-permethrin + H2O = (3-phenoxyphenyl)methanol + (1S,3R)-3-(2,2-dichlorovinyl)-2,2-dimethylcyclopropanecarboxylate + H(+). It carries out the reaction all-trans-retinyl hexadecanoate + H2O = all-trans-retinol + hexadecanoate + H(+). In terms of biological role, carboxylesterases that catalyzes the hydrolysis of pyrethroids pesticides. Hydrolyzes permethrin faster than cypermethrin. Hydrolyzes retinyl esters. The chain is Pyrethroid hydrolase Ces2a from Mus musculus (Mouse).